The primary structure comprises 230 residues: uncharacterized protein (230 aa).

The 68-residue stretch at 2–69 (HRLAKIISNA…KPRLWIYYKP (68 aa)) folds into the S4 RNA-binding domain. The active-site Nucleophile is aspartate 102.

It belongs to the pseudouridine synthase RsuA family.

It carries out the reaction a uridine in RNA = a pseudouridine in RNA. This is an uncharacterized protein from Rickettsia conorii (strain ATCC VR-613 / Malish 7).